Consider the following 244-residue polypeptide: Mitochondrial import inner membrane translocase subunit Tim21 (244 aa).

Residues 1–18 (MICTLLRAVRCTERLHGC) constitute a mitochondrion transit peptide. Positions 69–89 (VRSPQSAKEDGSKQVSVHRSQ) are disordered. A helical transmembrane segment spans residues 108 to 128 (FTYLIVVLIGISITGGLFYTI).

The protein belongs to the TIM21 family. In terms of assembly, component of the TIM23 complex. Component of the MITRAC (mitochondrial translation regulation assembly intermediate of cytochrome c oxidase complex) complex, the core components of this complex being COA3/MITRAC12 and COX14. Interacts with COA3 and MT-CO1/COX1.

It localises to the mitochondrion membrane. In terms of biological role, participates in the translocation of transit peptide-containing proteins across the mitochondrial inner membrane. Also required for assembly of mitochondrial respiratory chain complex I and complex IV as component of the MITRAC (mitochondrial translation regulation assembly intermediate of cytochrome c oxidase complex) complex. Probably shuttles between the presequence translocase and respiratory-chain assembly intermediates in a process that promotes incorporation of early nuclear-encoded subunits into these complexes. This Bos taurus (Bovine) protein is Mitochondrial import inner membrane translocase subunit Tim21 (TIMM21).